Here is a 1080-residue protein sequence, read N- to C-terminus: MDFSWTTGWEKAAADDDEAESAPAPAPPAPSPQEAAESMILVPGPRVVLSGLMRGDCRADDSVLFINAGGSATEGCEPSSKLSEDSFFEGGDAIETSEDIVEGGDYPSLYHSARYGNFSYKIDGLAPGDYFLDLHFAEIVNTYGPKGIRAFDVLVQEEKANTLTHILSELDVYAVVGGNRPLQVRDIRVTVESDSAIVINFKGVRGSPMVCGICIRKRVAMAVTDMVTEGNVLCKRCSAHTGNSPLQTRTSKLISKYEKQIEELTNQCNMKSDECYMAWSSVESTNQELERLKIELHQKVMQSDNIEQVVDRQADQLRSVSQKYENAKKLWAAAISNLENKIKAMKQEQTLLSLEAHDCANAVPDLSKMIGAVQTLVAQCEDLKLKYYEEMAKRKKLHNIVEETKGNIRVFCRCRPLSKDETSSGYKCAVDFDGAKDGDIAIVNGGAAKKTFKFDRVYMPTDNQADVYADASPLVTSVLDGYNVCIFAYGQTGTGKTFTMEGTERNRGVNYRTLEELFKIAEERKETVTYSISVSVLEVYNEQIRDLLASSPSSKKLEIKQASEGSHHVPGIVEAKVENIKEVWDVLQAGSNARAVGSNNVNEHSSRSHCMLCIMVRAENLMNGECTRSKLWLVDLAGSERLAKTDVQGERLKEAQNINRSLSALGDVISALATKNSHIPYRNSKLTHLLQDSLGGDSKALMFVQISPSNNDVSETLSSLNFASRVRRIELGPAKKQVDTAELQKVKQMLERAKQDIRLKDDSLRKLEDNCQNLENKAKGKEQFYKNLQEKVKELESQLDSKMHSQITSEKQQNELFGKLKEKEEMCTTLQQKIAEESEHKLRLQQQSESEIKELELKLKEQEHHRSVAESKIKELELKLKEQEHHRSVAESKAMEIGQELLETQRTEAMLQIKPRDLENNLQERTTLQDTNMILDSTNCMRVASTPGEAKAHLLTREEAMSEKEQHILRSSDSMNKKVTNNSSIVGAPEVVNEKKRKGDARNSSIGGELENQPVGSQNASRKRSLQGEPRLKRKSTEPLKNPGRVTATSKTAAATHKTGPVTRATRQQPAVNKTRGWVR.

Residues 1–35 (MDFSWTTGWEKAAADDDEAESAPAPAPPAPSPQEA) form a disordered region. The stretch at 247-355 (QTRTSKLISK…KQEQTLLSLE (109 aa)) forms a coiled coil. One can recognise a Kinesin motor domain in the interval 407–729 (NIRVFCRCRP…LNFASRVRRI (323 aa)). Residue 490-497 (GQTGTGKT) participates in ATP binding. Residues 736-893 (KQVDTAELQK…EHHRSVAESK (158 aa)) are a coiled coil. Residues 960-970 (AMSEKEQHILR) show a composition bias toward basic and acidic residues. Residues 960–1080 (AMSEKEQHIL…AVNKTRGWVR (121 aa)) are disordered. The span at 971-985 (SSDSMNKKVTNNSSI) shows a compositional bias: polar residues. The segment covering 1047-1059 (TATSKTAAATHKT) has biased composition (low complexity).

The protein belongs to the TRAFAC class myosin-kinesin ATPase superfamily. Kinesin family. KIN-14 subfamily.

This Oryza sativa subsp. japonica (Rice) protein is Kinesin-like protein KIN-14E.